The chain runs to 854 residues: Zinc finger protein 341 (854 aa).

The C2H2-type 1; atypical zinc-finger motif lies at 53–76 (FLCGKCKKQFNSLPAFMTHKREQC). The tract at residues 152-217 (DQPMPQGPPP…GRPNPGGNGV (66 aa)) is disordered. Positions 163-176 (QSSLNMHSVPSYLT) are enriched in polar residues. Residues 177-210 (QPPPPPPPPPPLPPPPPPQPPPPPPQSLGPPGRP) are compositionally biased toward pro residues. 2 consecutive C2H2-type zinc fingers follow at residues 322 to 344 (LKCS…IRSH) and 350 to 372 (FQCI…MQTH). The segment at 399–434 (SRQEDEESTGLGQPLPGAPQPQALSTAGEEEGDKPE) is disordered. Residues 408-422 (GLGQPLPGAPQPQAL) are compositionally biased toward low complexity. 9 consecutive C2H2-type zinc fingers follow at residues 445 to 467 (YLCQ…MTQH), 473 to 497 (YKCV…IKSH), 503 to 525 (YRCH…QYSH), 540 to 564 (YKCV…TATH), 566 to 588 (FPCP…LPTH), 594 to 616 (FKCQ…AHIH), 622 to 644 (YKCS…MLIH), 650 to 677 (YKCP…ILSH), and 683 to 705 (HKCA…QRAH). Residues 731–763 (CRLGPQKDKDLQTRRPPQRRAAPRSCGSGGRKV) form a disordered region.

The protein belongs to the krueppel C2H2-type zinc-finger protein family. Binds DNA and to the STAT3 promoter.

Its subcellular location is the nucleus. In terms of biological role, transcriptional activator of STAT3 involved in the regulation of immune homeostasis. Also able to activate STAT1 transcription. The protein is Zinc finger protein 341 (ZNF341) of Homo sapiens (Human).